Here is a 27-residue protein sequence, read N- to C-terminus: Secretin (27 aa).

Position 27 is a leucine amide (leucine 27).

This sequence belongs to the glucagon family.

Its subcellular location is the secreted. Hormone involved in different processes, such as regulation of the pH of the duodenal content, food intake and water homeostasis. Exerts its biological effects by binding to secretin receptor (SCTR), a G-protein coupled receptor expressed in the basolateral domain of several cells. Acts as a key gastrointestinal hormone by regulating the pH of the duodenal content. Secreted by S cells of the duodenum in the crypts of Lieberkuehn and regulates the pH of the duodenum by (1) inhibiting the secretion of gastric acid from the parietal cells of the stomach and (2) stimulating the production of bicarbonate (NaHCO(3)) from the ductal cells of the pancreas. Production of bicarbonate is essential to neutralize the pH and ensure no damage is done to the small intestine by the gastric acid. In addition to regulating the pH of the duodenal content, plays a central role in diet induced thermogenesis: acts as a non-sympathetic brown fat (BAT) activator mediating prandial thermogenesis, which consequentially induces satiation. Mechanistically, secretin released by the gut after a meal binds to secretin receptor (SCTR) in brown adipocytes, activating brown fat thermogenesis by stimulating lipolysis, which is sensed in the brain and promotes satiation. Also able to stimulate lipolysis in white adipocytes. Also plays an important role in cellular osmoregulation: released into the systemic circulation in response to hyperosmolality and acts at different levels in the hypothalamus, pituitary and kidney to regulate water homeostasis. Also plays a role in the central nervous system, possibly by acting as a neuropeptide hormone: required for hippocampal synaptic function and neural progenitor cells maintenance. The chain is Secretin from Oryctolagus cuniculus (Rabbit).